Here is a 181-residue protein sequence, read N- to C-terminus: uncharacterized protein (181 aa).

Positions 1 to 19 are cleaved as a signal peptide; the sequence is MRRLLACSAGVLCFSQLGA.

This is an uncharacterized protein from Treponema pallidum (strain Nichols).